The following is a 445-amino-acid chain: Argininosuccinate synthase (445 aa).

ATP contacts are provided by residues 17–25 and alanine 43; that span reads AFSGGLDTS. Position 99 (tyrosine 99) interacts with L-citrulline. Residues glycine 129 and threonine 131 each coordinate ATP. The L-aspartate site is built by threonine 131, asparagine 135, and aspartate 136. Asparagine 135 contacts L-citrulline. Residue aspartate 136 participates in ATP binding. L-citrulline is bound by residues arginine 139 and serine 192. Aspartate 194 provides a ligand contact to ATP. L-citrulline is bound by residues threonine 201, glutamate 203, and glutamate 280.

The protein belongs to the argininosuccinate synthase family. Type 2 subfamily. In terms of assembly, homotetramer.

Its subcellular location is the cytoplasm. The enzyme catalyses L-citrulline + L-aspartate + ATP = 2-(N(omega)-L-arginino)succinate + AMP + diphosphate + H(+). It functions in the pathway amino-acid biosynthesis; L-arginine biosynthesis; L-arginine from L-ornithine and carbamoyl phosphate: step 2/3. The protein is Argininosuccinate synthase of Gemmatimonas aurantiaca (strain DSM 14586 / JCM 11422 / NBRC 100505 / T-27).